The primary structure comprises 204 residues: Dephospho-CoA kinase (204 aa).

The DPCK domain occupies 4–201 (VIGLTGGIAS…EKYLAMCKKN (198 aa)). Residue 12 to 17 (ASGKTT) coordinates ATP.

The protein belongs to the CoaE family.

The protein localises to the cytoplasm. The enzyme catalyses 3'-dephospho-CoA + ATP = ADP + CoA + H(+). It participates in cofactor biosynthesis; coenzyme A biosynthesis; CoA from (R)-pantothenate: step 5/5. Functionally, catalyzes the phosphorylation of the 3'-hydroxyl group of dephosphocoenzyme A to form coenzyme A. The sequence is that of Dephospho-CoA kinase from Vibrio parahaemolyticus serotype O3:K6 (strain RIMD 2210633).